A 474-amino-acid chain; its full sequence is L-arabinose isomerase (474 aa).

Residues E306, E331, H348, and H447 each coordinate Mn(2+).

The protein belongs to the arabinose isomerase family. The cofactor is Mn(2+).

The catalysed reaction is beta-L-arabinopyranose = L-ribulose. It functions in the pathway carbohydrate degradation; L-arabinose degradation via L-ribulose; D-xylulose 5-phosphate from L-arabinose (bacterial route): step 1/3. Catalyzes the conversion of L-arabinose to L-ribulose. This Pediococcus pentosaceus (strain ATCC 25745 / CCUG 21536 / LMG 10740 / 183-1w) protein is L-arabinose isomerase.